Consider the following 406-residue polypeptide: Nicotinate phosphoribosyltransferase (406 aa).

Phosphohistidine; by autocatalysis is present on histidine 227.

This sequence belongs to the NAPRTase family. In terms of processing, transiently phosphorylated on a His residue during the reaction cycle. Phosphorylation strongly increases the affinity for substrates and increases the rate of nicotinate D-ribonucleotide production. Dephosphorylation regenerates the low-affinity form of the enzyme, leading to product release.

The catalysed reaction is nicotinate + 5-phospho-alpha-D-ribose 1-diphosphate + ATP + H2O = nicotinate beta-D-ribonucleotide + ADP + phosphate + diphosphate. It participates in cofactor biosynthesis; NAD(+) biosynthesis; nicotinate D-ribonucleotide from nicotinate: step 1/1. Its function is as follows. Catalyzes the synthesis of beta-nicotinate D-ribonucleotide from nicotinate and 5-phospho-D-ribose 1-phosphate at the expense of ATP. This is Nicotinate phosphoribosyltransferase from Methanosarcina mazei (strain ATCC BAA-159 / DSM 3647 / Goe1 / Go1 / JCM 11833 / OCM 88) (Methanosarcina frisia).